Reading from the N-terminus, the 351-residue chain is CREB homolog crh-2 (351 aa).

Disordered regions lie at residues 46–104 (EPCT…EPLG) and 119–149 (SPSA…HQQQ). Residues 82-95 (GSSSGSPSSSLSSP) show a composition bias toward low complexity. A bZIP domain is found at 282 to 345 (SLKIVRRKIK…RDLQQKLHQY (64 aa)). Residues 284-304 (KIVRRKIKNKLSAQESRRKRK) form a basic motif region. The tract at residues 307–314 (IDALEGRL) is leucine-zipper.

This sequence belongs to the bZIP family.

Its subcellular location is the nucleus. Functionally, transcription factor. Plays a role in regulating the developmentally arrested larval state known as dauer, when induced by long-term exposure to the Gram-negative bacterium P.aeruginosa PAO1, but dispensable for dauer formation induced by starvation. Involved in regulating expression of microRNA mir-243, during long-term exposure to P.aeruginosa PAO1. The sequence is that of CREB homolog crh-2 from Caenorhabditis elegans.